The sequence spans 390 residues: Mannitol-1-phosphate 5-dehydrogenase (390 aa).

7-18 (AVHFGGGNIGRG) contacts NAD(+). The active site involves Lys216.

This sequence belongs to the mannitol dehydrogenase family. Monomer.

It catalyses the reaction D-mannitol 1-phosphate + NAD(+) = beta-D-fructose 6-phosphate + NADH + H(+). In terms of biological role, catalyzes the NAD(H)-dependent interconversion of D-fructose 6-phosphate and D-mannitol 1-phosphate in the mannitol metabolic pathway. Has a strong preference for NADH over NADPH. The polypeptide is Mannitol-1-phosphate 5-dehydrogenase (Alternaria alternata (Alternaria rot fungus)).